The primary structure comprises 265 residues: Ribonuclease 3 (265 aa).

The 124-residue stretch at 34 to 157 (LAVLTRKLGY…LIGAIYLDSQ (124 aa)) folds into the RNase III domain. Residue E70 participates in Mg(2+) binding. The active site involves D74. D143 and E146 together coordinate Mg(2+). E146 is an active-site residue. A DRBM domain is found at 185 to 256 (DAKSRLQEWL…AELMINQLHK (72 aa)).

The protein belongs to the ribonuclease III family. As to quaternary structure, homodimer. The cofactor is Mg(2+).

Its subcellular location is the cytoplasm. The catalysed reaction is Endonucleolytic cleavage to 5'-phosphomonoester.. Its function is as follows. Digests double-stranded RNA. Involved in the processing of primary rRNA transcript to yield the immediate precursors to the large and small rRNAs (23S and 16S). Processes some mRNAs, and tRNAs when they are encoded in the rRNA operon. Processes pre-crRNA and tracrRNA of type II CRISPR loci if present in the organism. The chain is Ribonuclease 3 from Psychrobacter arcticus (strain DSM 17307 / VKM B-2377 / 273-4).